Reading from the N-terminus, the 239-residue chain is tRNA (guanine-N(1)-)-methyltransferase (239 aa).

S-adenosyl-L-methionine is bound by residues Gly112 and 132-137; that span reads IGDYVL.

Belongs to the RNA methyltransferase TrmD family. In terms of assembly, homodimer.

The protein resides in the cytoplasm. It catalyses the reaction guanosine(37) in tRNA + S-adenosyl-L-methionine = N(1)-methylguanosine(37) in tRNA + S-adenosyl-L-homocysteine + H(+). Its function is as follows. Specifically methylates guanosine-37 in various tRNAs. This Rhodospirillum rubrum (strain ATCC 11170 / ATH 1.1.1 / DSM 467 / LMG 4362 / NCIMB 8255 / S1) protein is tRNA (guanine-N(1)-)-methyltransferase.